The primary structure comprises 848 residues: Neuroligin-3 (848 aa).

A signal peptide spans Met-1–Thr-37. Over Gln-38–Ser-709 the chain is Extracellular. Asn-98 is a glycosylation site (N-linked (GlcNAc...) asparagine). A disulfide bridge links Cys-106 with Cys-141. The segment at Cys-169–Arg-195 is disordered. Over residues Asp-182–Ile-194 the composition is skewed to acidic residues. 2 cysteine pairs are disulfide-bonded: Cys-340/Cys-351 and Cys-510/Cys-544. The N-linked (GlcNAc...) asparagine glycan is linked to Asn-545. Polar residues-rich tracts occupy residues Thr-645–Ser-656 and Ala-677–Gly-689. The disordered stretch occupies residues Thr-645–Gln-691. The helical transmembrane segment at Val-710–Tyr-730 threads the bilayer. The Cytoplasmic portion of the chain corresponds to Tyr-731–Val-848. Ser-745 carries the post-translational modification Phosphoserine. Residue Tyr-792 is modified to Phosphotyrosine.

This sequence belongs to the type-B carboxylesterase/lipase family. Homodimer, and heterodimer with NLGN1 and NLGN2. Interacts with neurexins NRXN1, NRXN2 and NRXN3. Interaction with neurexins is mediated by heparan sulfate glycan modification on neurexin. Interacts (via its C-terminus) with DLG4/PSD-95 (via PDZ domain 3). Post-translationally, the N-terminus is blocked. Detected in brain and on hippocampus neurons, especially at excitatory synapses. Detected in retina (at protein level). Expressed in brain, spinal cord and dorsal root ganglion.

It is found in the cell membrane. The protein localises to the synapse. Its function is as follows. Cell surface protein involved in cell-cell-interactions via its interactions with neurexin family members. Plays a role in synapse function and synaptic signal transmission, and probably mediates its effects by recruiting and clustering other synaptic proteins. May promote the initial formation of synapses, but is not essential for this. May also play a role in glia-glia or glia-neuron interactions in the developing peripheral nervous system. In Rattus norvegicus (Rat), this protein is Neuroligin-3 (Nlgn3).